A 94-amino-acid chain; its full sequence is Defensin alpha 5 (94 aa).

Residues 1–19 (MRTIAILAAILLVALQAQA) form the signal peptide. Cystine bridges form between cysteine 65/cysteine 93, cysteine 67/cysteine 82, and cysteine 72/cysteine 92.

Belongs to the alpha-defensin family. Homodimer. Homotetramer. Interacts with B.antracis lef/lethal factor. Glycosylated. In terms of processing, proteolytically cleaved at Arg-62 by trypsin. Both the propeptide form proHD5/HD5(20-94) and HD5(56-94) are cleaved into the lumenal peptide form HD5(63-94) by trypsin. Unprocessed proHD5 exerts antimicrobial activities, but peptide potency is enhanced by peptide processing. Proteolytically cleaved in duodenal fluid; derived fragments are antimicrobially active against commensal bacteria (in vitro).

Its subcellular location is the secreted. The protein resides in the cytoplasmic vesicle. The protein localises to the secretory vesicle. In terms of biological role, host-defense peptide that maintains sterility in the urogenital system. Has antimicrobial activity against a wide range of bacteria, including Gram-negative E.coli, P.aeruginosa and S.typhimurium, and Gram-positive E.aerogenes, S.aureus, B.cereus, E.faecium and L.monocytogenes. Confers resistance to intestinal infection by S.typhimurium. Exhibits antimicrobial activity against enteric commensal bacteria such as B.adolescentis, L.acidophilus, B.breve, L.fermentum, B.longum and S.thermophilus. Binds to bacterial membranes and causes membrane disintegration. Induces the secretion of the chemokine IL-8 by intestinal epithelial cells. Binds to B.antracis lef/lethal factor, a major virulence factor from B.anthracis, and neutralizes its enzymatic activity. The sequence is that of Defensin alpha 5 (DEFA5) from Pan troglodytes (Chimpanzee).